Here is a 217-residue protein sequence, read N- to C-terminus: UPF0319 protein VP1009 (217 aa).

A signal peptide spans M1 to A21.

It belongs to the UPF0319 family.

The polypeptide is UPF0319 protein VP1009 (Vibrio parahaemolyticus serotype O3:K6 (strain RIMD 2210633)).